The chain runs to 346 residues: Guanine nucleotide-binding protein subunit beta-2 (346 aa).

WD repeat units follow at residues Gly57–Ile96, Leu99–Val138, Gly147–Asp185, Gly188–Met227, Gly230–Gln269, Gln274–Thr313, and Gly316–Leu346.

The protein belongs to the WD repeat G protein beta family. G proteins are composed of 3 units, alpha, beta and gamma. Interacts with Ggamma30A/Guanine nucleotide-binding protein subunit gamma-e. As to expression, expressed exclusively in photoreceptor cells in the compound eye (at protein level).

The protein resides in the cytoplasm. Its subcellular location is the cell projection. It is found in the axon. It localises to the rhabdomere. Guanine nucleotide-binding proteins (G proteins) are involved as a modulator or transducer in various transmembrane signaling systems. The beta and gamma chains are required for the GTPase activity, for replacement of GDP by GTP, and for G protein-effector interaction. The polypeptide is Guanine nucleotide-binding protein subunit beta-2 (Gbeta76C) (Drosophila melanogaster (Fruit fly)).